We begin with the raw amino-acid sequence, 509 residues long: Inositol-3-phosphate synthase 1 (509 aa).

This sequence belongs to the myo-inositol 1-phosphate synthase family. It depends on NAD(+) as a cofactor. Highly expressed in anthers, but transcripts are undetectable in roots, leaves, flowers and embryos.

The protein localises to the cytoplasm. It carries out the reaction D-glucose 6-phosphate = 1D-myo-inositol 3-phosphate. It functions in the pathway polyol metabolism; myo-inositol biosynthesis; myo-inositol from D-glucose 6-phosphate: step 1/2. Functionally, key enzyme in myo-inositol biosynthesis pathway that catalyzes the conversion of glucose 6-phosphate to 1-myo-inositol 1-phosphate in a NAD-dependent manner. Is a key enzyme in the phytic acid biosynthesis pathway in seeds. This Oryza sativa subsp. japonica (Rice) protein is Inositol-3-phosphate synthase 1.